A 352-amino-acid polypeptide reads, in one-letter code: Zona pellucida-binding protein 2 (352 aa).

The signal sequence occupies residues 1-28; sequence MAGGGGRPCSPQRALLGMVAIMAVVAEA. Residues asparagine 110 and asparagine 309 are each glycosylated (N-linked (GlcNAc...) asparagine).

Belongs to the zona pellucida-binding protein Sp38 family.

The protein localises to the secreted. It is found in the cytoplasmic vesicle. Its subcellular location is the secretory vesicle. The protein resides in the acrosome. Its function is as follows. May be implicated in the gamete interaction during fertilization. This Gallus gallus (Chicken) protein is Zona pellucida-binding protein 2 (ZPBP2).